The sequence spans 102 residues: uncharacterized protein (102 aa).

Positions 1–22 (MKFKYGATLFSGFLGLSAILAA) are cleaved as a signal peptide. C23 is lipidated: N-palmitoyl cysteine. Residue C23 is the site of S-diacylglycerol cysteine attachment.

Belongs to the MG185/MG260 family.

It is found in the cell membrane. This is an uncharacterized protein from Mycoplasma pneumoniae (strain ATCC 29342 / M129 / Subtype 1) (Mycoplasmoides pneumoniae).